The sequence spans 1563 residues: Integrator complex subunit 5-like protein (1563 aa).

Basic and acidic residues-rich tracts occupy residues 1 to 21 (MKEEETIEISEKEKDKERNDN) and 31 to 44 (EDWRNEETATKNEN). Disordered regions lie at residues 1–63 (MKEE…YDDD), 102–208 (KKSK…NITY), and 270–310 (NSLN…QQNP). Acidic residues predominate over residues 52-63 (GDSDDDDYYDDD). Composition is skewed to low complexity over residues 109–133 (TAATTTTTTTTTTTTTTTTTPTATA) and 141–202 (NNLL…NNNN). A helical transmembrane segment spans residues 350 to 370 (DSIINWSLSTLTIITRLLIIL). The segment covering 381–398 (QQQQQQQQQQQQQQQQQQ) has biased composition (low complexity). Disordered stretches follow at residues 381 to 417 (QQQQQQQQQQQQQQQQQQTKNKTQFPPPPPPPLRQPI), 466 to 498 (SKSSSSSSSSSSSSSSSSSSSSSSSSSSSSSKT), 637 to 694 (FDNN…DNSS), and 784 to 828 (ILNN…SQEI). Residues 405–414 (FPPPPPPPLR) show a composition bias toward pro residues. 3 stretches are compositionally biased toward low complexity: residues 468-496 (SSSSSSSSSSSSSSSSSSSSSSSSSSSSS), 639-686 (NNNN…NNNN), and 786-824 (NNNNNNNNNNNNNNNNNNNNNNNNNNNNNNNNNQQQQQQ). The chain crosses the membrane as a helical span at residues 877-897 (IIIKLISLIGMDSIYSSLIIL). Disordered stretches follow at residues 1154-1173 (SGNFGNGDDDDDEYGDDEYG) and 1268-1303 (KQRMKKKKQSIQQNGNINNEQQQEEDDNDDADDQNE). A compositionally biased stretch (acidic residues) spans 1160–1172 (GDDDDDEYGDDEY). The segment covering 1277-1288 (SIQQNGNINNEQ) has biased composition (low complexity). Residues 1289-1303 (QQEEDDNDDADDQNE) are compositionally biased toward acidic residues.

Belongs to the Integrator subunit 5 family. In terms of assembly, component of the Integrator complex. The core complex associates with protein phosphatase 2A subunits, to form the Integrator-PP2A (INTAC) complex.

Its subcellular location is the nucleus. It is found in the cytoplasm. It localises to the nucleus membrane. Component of the integrator complex, a multiprotein complex that terminates RNA polymerase II (Pol II) transcription in the promoter-proximal region of genes. The integrator complex provides a quality checkpoint during transcription elongation by driving premature transcription termination of transcripts that are unfavorably configured for transcriptional elongation: the complex terminates transcription by (1) catalyzing dephosphorylation of the C-terminal domain (CTD) of Pol II subunit polr2a, (2) degrading the exiting nascent RNA transcript via endonuclease activity and (3) promoting the release of Pol II from bound DNA. The integrator complex is also involved in terminating the synthesis of non-coding Pol II transcripts, such as enhancer RNAs (eRNAs), small nuclear RNAs (snRNAs), telomerase RNAs and long non-coding RNAs (lncRNAs). In Dictyostelium discoideum (Social amoeba), this protein is Integrator complex subunit 5-like protein.